A 673-amino-acid chain; its full sequence is Acetoacetyl-CoA synthetase (673 aa).

This sequence belongs to the ATP-dependent AMP-binding enzyme family.

Its subcellular location is the cytoplasm. The protein localises to the cytosol. The catalysed reaction is acetoacetate + ATP + CoA = acetoacetyl-CoA + AMP + diphosphate. Functionally, converts acetoacetate to acetoacetyl-CoA in the cytosol. Ketone body-utilizing enzyme, responsible for the synthesis of cholesterol and fatty acids. The sequence is that of Acetoacetyl-CoA synthetase (aacs) from Danio rerio (Zebrafish).